The chain runs to 279 residues: Energy-coupling factor transporter ATP-binding protein EcfA1 (279 aa).

The 233-residue stretch at I8–D240 folds into the ABC transporter domain. ATP is bound at residue G41 to S48.

It belongs to the ABC transporter superfamily. Energy-coupling factor EcfA family. Forms a stable energy-coupling factor (ECF) transporter complex composed of 2 membrane-embedded substrate-binding proteins (S component), 2 ATP-binding proteins (A component) and 2 transmembrane proteins (T component).

Its subcellular location is the cell membrane. In terms of biological role, ATP-binding (A) component of a common energy-coupling factor (ECF) ABC-transporter complex. Unlike classic ABC transporters this ECF transporter provides the energy necessary to transport a number of different substrates. The sequence is that of Energy-coupling factor transporter ATP-binding protein EcfA1 from Mycoplasmoides gallisepticum (strain R(low / passage 15 / clone 2)) (Mycoplasma gallisepticum).